Reading from the N-terminus, the 203-residue chain is 3-isopropylmalate dehydratase small subunit (203 aa).

It belongs to the LeuD family. LeuD type 1 subfamily. In terms of assembly, heterodimer of LeuC and LeuD.

The catalysed reaction is (2R,3S)-3-isopropylmalate = (2S)-2-isopropylmalate. It participates in amino-acid biosynthesis; L-leucine biosynthesis; L-leucine from 3-methyl-2-oxobutanoate: step 2/4. In terms of biological role, catalyzes the isomerization between 2-isopropylmalate and 3-isopropylmalate, via the formation of 2-isopropylmaleate. This chain is 3-isopropylmalate dehydratase small subunit, found in Symbiobacterium thermophilum (strain DSM 24528 / JCM 14929 / IAM 14863 / T).